A 234-amino-acid chain; its full sequence is UPF0309 protein lmo0025 (234 aa).

The 175-residue stretch at 31 to 205 (VADSIMNDGI…ELMLEKGYTP (175 aa)) folds into the SIS domain.

This sequence belongs to the UPF0309 family.

The sequence is that of UPF0309 protein lmo0025 from Listeria monocytogenes serovar 1/2a (strain ATCC BAA-679 / EGD-e).